We begin with the raw amino-acid sequence, 433 residues long: Serine--tRNA ligase (433 aa).

235-237 (TSE) contributes to the L-serine binding site. ATP is bound at residue 266-268 (RSE). Glu-289 lines the L-serine pocket. ATP is bound at residue 353–356 (EISS). Ser-388 serves as a coordination point for L-serine.

Belongs to the class-II aminoacyl-tRNA synthetase family. Type-1 seryl-tRNA synthetase subfamily. As to quaternary structure, homodimer. The tRNA molecule binds across the dimer.

Its subcellular location is the cytoplasm. The enzyme catalyses tRNA(Ser) + L-serine + ATP = L-seryl-tRNA(Ser) + AMP + diphosphate + H(+). The catalysed reaction is tRNA(Sec) + L-serine + ATP = L-seryl-tRNA(Sec) + AMP + diphosphate + H(+). It participates in aminoacyl-tRNA biosynthesis; selenocysteinyl-tRNA(Sec) biosynthesis; L-seryl-tRNA(Sec) from L-serine and tRNA(Sec): step 1/1. Catalyzes the attachment of serine to tRNA(Ser). Is also able to aminoacylate tRNA(Sec) with serine, to form the misacylated tRNA L-seryl-tRNA(Sec), which will be further converted into selenocysteinyl-tRNA(Sec). This is Serine--tRNA ligase from Burkholderia pseudomallei (strain 1106a).